Here is a 322-residue protein sequence, read N- to C-terminus: MTYARITGTGGCLPEKILTNHDLEKMVETTDEWIQERTGIKKRHVAGPEETTCDLAERAARRAMEMAGRSSADIDLIIVATTTPDRVFPSTACLLQKRLEIHGCAAFDVQAVCTGFVYALGVADRFIRTGGAKCALVVGAETLSRIVDWTDRTTCVLFGDGAGAVVLEASEEQGILSTHLHADGRFDNLLHVPKGISTAYSEVLAGEAYIEMKGNEVFKVAVNTLGRIVDETLEYNDIDQAEIDWLIPHQANIRIIQATARKLKMPMDRVVVTVDEHGNTSAASIPLALDVAVRDGRVRPGDLLMMEAFGGGFTWGSALLRF.

Catalysis depends on residues C113 and H249. Residues 250-254 (QANIR) are ACP-binding. Residue N279 is part of the active site.

It belongs to the thiolase-like superfamily. FabH family. As to quaternary structure, homodimer.

It localises to the cytoplasm. It carries out the reaction malonyl-[ACP] + acetyl-CoA + H(+) = 3-oxobutanoyl-[ACP] + CO2 + CoA. It participates in lipid metabolism; fatty acid biosynthesis. Catalyzes the condensation reaction of fatty acid synthesis by the addition to an acyl acceptor of two carbons from malonyl-ACP. Catalyzes the first condensation reaction which initiates fatty acid synthesis and may therefore play a role in governing the total rate of fatty acid production. Possesses both acetoacetyl-ACP synthase and acetyl transacylase activities. Its substrate specificity determines the biosynthesis of branched-chain and/or straight-chain of fatty acids. The protein is Beta-ketoacyl-[acyl-carrier-protein] synthase III of Thioalkalivibrio sulfidiphilus (strain HL-EbGR7).